The primary structure comprises 2211 residues: Nonribosomal peptide synthetase 13 (2211 aa).

Positions 76–475 (TYAELDSLSD…IEHHLQLTLP (400 aa)) are adenylation 1. In terms of domain architecture, Carrier 1 spans 594 to 671 (PPSTPKEATI…EQSKRAGLIQ (78 aa)). At Ser-631 the chain carries O-(pantetheine 4'-phosphoryl)serine. A condensation 1 region spans residues 710–975 (EDIYPCTALQ…IATVPTRIRV (266 aa)). The adenylation 2 stretch occupies residues 1169–1563 (TYRELWAHSS…LGAVEASVMR (395 aa)). In terms of domain architecture, Carrier 2 spans 1677–1756 (PMSDDNERRL…RSRHLITEQA (80 aa)). Ser-1714 is subject to O-(pantetheine 4'-phosphoryl)serine. The tract at residues 1814-2069 (HFQFDLSGAV…CTNYIPYRLS (256 aa)) is condensation 2.

It belongs to the NRP synthetase family.

The enzyme catalyses L-proline + L-tryptophan + 2 ATP = brevianamide F + 2 AMP + 2 diphosphate + 2 H(+). It participates in mycotoxin biosynthesis. Its function is as follows. Nonribosomal peptide synthetase; part of the gene cluster that mediates the biosynthesis of fumitremorgins, indole alkaloids that carry not only intriguing chemical structures, but also interesting biological and pharmacological activities. The biosynthesis of fumitremorgin-type alkaloids begins by condensation of the two amino acids L-tryptophan and L-proline to brevianamide F, catalyzed by the non-ribosomal peptide synthetase ftmA. Brevianamide F is then prenylated by the prenyltransferase ftmPT1/ftmB in the presence of dimethylallyl diphosphate, resulting in the formation of tryprostatin B. The three cytochrome P450 monooxygenases, ftmP450-1/ftmC, ftmP450-2/ftmE and ftmP450-3/FtmG, are responsible for the conversion of tryprostatin B to 6-hydroxytryprostatin B, tryprostatin A to fumitremorgin C and fumitremorgin C to 12,13-dihydroxyfumitremorgin C, respectively. The putative methyltransferase ftmMT/ftmD is expected for the conversion of 6-hydroxytryprostatin B to tryprostatin A. FtmPT2/FtmH catalyzes the prenylation of 12,13-dihydroxyfumitre-morgin C in the presence of dimethylallyl diphosphate, resulting in the formation of fumitremorgin B. Fumitremorgin B is further converted to verruculogen by ftmOx1/ftmF via the insertion of an endoperoxide bond between the two prenyl moieties. In some fungal species, verruculogen is further converted to fumitremorgin A, but the enzymes involved in this step have not been identified yet. The polypeptide is Nonribosomal peptide synthetase 13 (Aspergillus fumigatus (Neosartorya fumigata)).